We begin with the raw amino-acid sequence, 256 residues long: DNA repair protein RecO (256 aa).

It belongs to the RecO family.

Its function is as follows. Involved in DNA repair and RecF pathway recombination. The chain is DNA repair protein RecO from Rhizobium etli (strain ATCC 51251 / DSM 11541 / JCM 21823 / NBRC 15573 / CFN 42).